Here is a 429-residue protein sequence, read N- to C-terminus: Formate-dependent phosphoribosylglycinamide formyltransferase (429 aa).

N(1)-(5-phospho-beta-D-ribosyl)glycinamide-binding positions include 26–27 and Glu86; that span reads EL. ATP contacts are provided by residues Arg118, Lys159, 199–202, and Glu207; that span reads EEHI. The ATP-grasp domain maps to 123-319; that stretch reads ETLVKEAKVP…EFGLHLRAVL (197 aa). Residues Glu276 and Glu288 each contribute to the Mg(2+) site. Residues Asp295, Lys375, and 382–383 contribute to the N(1)-(5-phospho-beta-D-ribosyl)glycinamide site; that span reads RR.

Belongs to the PurK/PurT family. In terms of assembly, homodimer.

The catalysed reaction is N(1)-(5-phospho-beta-D-ribosyl)glycinamide + formate + ATP = N(2)-formyl-N(1)-(5-phospho-beta-D-ribosyl)glycinamide + ADP + phosphate + H(+). It functions in the pathway purine metabolism; IMP biosynthesis via de novo pathway; N(2)-formyl-N(1)-(5-phospho-D-ribosyl)glycinamide from N(1)-(5-phospho-D-ribosyl)glycinamide (formate route): step 1/1. Functionally, involved in the de novo purine biosynthesis. Catalyzes the transfer of formate to 5-phospho-ribosyl-glycinamide (GAR), producing 5-phospho-ribosyl-N-formylglycinamide (FGAR). Formate is provided by PurU via hydrolysis of 10-formyl-tetrahydrofolate. The protein is Formate-dependent phosphoribosylglycinamide formyltransferase of Pyrococcus abyssi (strain GE5 / Orsay).